A 201-amino-acid polypeptide reads, in one-letter code: Syndecan-2 (201 aa).

The N-terminal stretch at 1–18 (MQRAWILLTLGLMACVSA) is a signal peptide. The Extracellular portion of the chain corresponds to 19 to 144 (ETRAELTSDK…HSDNLFKRTE (126 aa)). 3 O-linked (Xyl...) (glycosaminoglycan) serine glycosylation sites follow: Ser41, Ser55, and Ser57. Disordered stretches follow at residues 42 to 69 (GLYP…PDLT) and 88 to 129 (TMTL…KSTD). A compositionally biased stretch (polar residues) spans 90–102 (TLKTQSITPTQTE). Residues 106-123 (ETDKKEFEISEAEEKQDP) show a composition bias toward basic and acidic residues. Ser115 carries the post-translational modification Phosphoserine. A helical transmembrane segment spans residues 145–169 (VLAAVIAGGVIGFLFAIFLILLLVY). Residues 170-201 (RMRKKDEGSYDLGERKPSSAAYQKAPTKEFYA) lie on the Cytoplasmic side of the membrane. Residues 178–201 (SYDLGERKPSSAAYQKAPTKEFYA) form a disordered region. Residue Ser187 is modified to Phosphoserine.

It belongs to the syndecan proteoglycan family. In terms of assembly, interacts (via cytoplasmic domain) with SARM1. Forms a complex with SDCBP and PDCD6IP. In terms of processing, O-glycosylated; contains both heparan sulfate and chondroitin sulfate.

It localises to the membrane. Its function is as follows. Cell surface proteoglycan which regulates dendritic arbor morphogenesis. The polypeptide is Syndecan-2 (Sdc2) (Rattus norvegicus (Rat)).